Here is a 459-residue protein sequence, read N- to C-terminus: Glutamate--tRNA ligase 2 (459 aa).

A 'HIGH' region motif is present at residues 8–18; that stretch reads PSPTGYLHIGG. A 'KMSKS' region motif is present at residues 237-241; it reads KLSKR. Lysine 240 is a binding site for ATP.

The protein belongs to the class-I aminoacyl-tRNA synthetase family. Glutamate--tRNA ligase type 1 subfamily. As to quaternary structure, monomer.

It is found in the cytoplasm. It catalyses the reaction tRNA(Glu) + L-glutamate + ATP = L-glutamyl-tRNA(Glu) + AMP + diphosphate. Catalyzes the attachment of glutamate to tRNA(Glu) in a two-step reaction: glutamate is first activated by ATP to form Glu-AMP and then transferred to the acceptor end of tRNA(Glu). The chain is Glutamate--tRNA ligase 2 from Campylobacter concisus (strain 13826).